Reading from the N-terminus, the 641-residue chain is Chaperone protein DnaK (641 aa).

Thr-199 bears the Phosphothreonine; by autocatalysis mark. Residues 603–627 (YGQQQAEGGAQAAGAAGGSSKADDA) are disordered. Residues 604 to 616 (GQQQAEGGAQAAG) show a composition bias toward low complexity.

The protein belongs to the heat shock protein 70 family.

Functionally, acts as a chaperone. This chain is Chaperone protein DnaK, found in Azoarcus sp. (strain BH72).